The primary structure comprises 618 residues: Chaperone protein DnaK (618 aa).

Thr175 bears the Phosphothreonine; by autocatalysis mark. The interval 576 to 618 (SQNAEPGADGGANSGANPGGTTGNTDTKDDNVVDAEYKVDDDK) is disordered. Gly residues predominate over residues 583-597 (ADGGANSGANPGGTT). The span at 601-618 (DTKDDNVVDAEYKVDDDK) shows a compositional bias: basic and acidic residues.

It belongs to the heat shock protein 70 family.

Functionally, acts as a chaperone. This chain is Chaperone protein DnaK, found in Clostridium kluyveri (strain NBRC 12016).